The primary structure comprises 970 residues: Type III restriction-modification enzyme EcoP15I Res subunit (970 aa).

The segment at 75 to 540 is helicase-like domain; the sequence is AKSNIIDVSM…EVGRGLRLPV (466 aa). The AMP site is built by threonine 91, glycine 122, phenylalanine 126, and aspartate 226. An endonuclease domain region spans residues 894-918; that stretch reads TYSPDFAYVVKTAEGDYLNFIIETK.

The protein belongs to the type III restriction-modification system Res protein family. In terms of assembly, a heterotetramer with stoichiometry Res(2)Mod(2). A heterotrimer with stoichiometry Res(1)Mod(2). The cofactor is Mg(2+). S-adenosyl-L-methionine is required as a cofactor.

The enzyme catalyses Endonucleolytic cleavage of DNA to give specific double-stranded fragments with terminal 5'-phosphates.. Functionally, a type III restriction enzyme that recognizes 2 inversely oriented double-stranded sequences 5'-CAGCAG-3' and cleaves DNA 25-27 base pairs downstream of one site. DNA restriction requires both the Res and Mod subunits. DNA topology affects its action; relaxed and negatively supercoiled DNA are digested but positively supercoiled DNA is not a good substrate. Interacts with DNA approximately one half-turn downstream of the recognition site. After binding to one recognition site undergoes random one-dimensional diffusion along DNA until it collides with a stationary enzyme bound to the second DNA site, which is when DNA cleavage occurs. The chain is Type III restriction-modification enzyme EcoP15I Res subunit from Escherichia coli.